Consider the following 206-residue polypeptide: Protein SUE1, mitochondrial (206 aa).

The transit peptide at 1 to 24 (MILLKRTKIRGVSVSFVSLQRRTH) directs the protein to the mitochondrion.

Its subcellular location is the mitochondrion envelope. Required for degradation of unstable forms of cytochrome c. This is Protein SUE1, mitochondrial from Saccharomyces cerevisiae (strain ATCC 204508 / S288c) (Baker's yeast).